We begin with the raw amino-acid sequence, 400 residues long: Argininosuccinate synthase (400 aa).

8–16 (AYSGGLDTS) is a binding site for ATP. Tyr-86 and Ser-91 together coordinate L-citrulline. Position 116 (Gly-116) interacts with ATP. Residues Thr-118, Asn-122, and Asp-123 each coordinate L-aspartate. Asn-122 contributes to the L-citrulline binding site. L-citrulline-binding residues include Arg-126, Ser-175, Ser-184, Glu-260, and Tyr-272.

It belongs to the argininosuccinate synthase family. Type 1 subfamily. In terms of assembly, homotetramer.

It is found in the cytoplasm. It carries out the reaction L-citrulline + L-aspartate + ATP = 2-(N(omega)-L-arginino)succinate + AMP + diphosphate + H(+). It participates in amino-acid biosynthesis; L-arginine biosynthesis; L-arginine from L-ornithine and carbamoyl phosphate: step 2/3. The sequence is that of Argininosuccinate synthase from Clostridium acetobutylicum (strain ATCC 824 / DSM 792 / JCM 1419 / IAM 19013 / LMG 5710 / NBRC 13948 / NRRL B-527 / VKM B-1787 / 2291 / W).